We begin with the raw amino-acid sequence, 775 residues long: Protein STRUBBELIG-RECEPTOR FAMILY 1 (775 aa).

Residues 1–31 (MRSMRSGRDNNICFLGFLSFALISLPSLSLA) form the signal peptide. Residues 32–314 (LTNPDDVAAI…GKEDSFTSKR (283 aa)) lie on the Extracellular side of the membrane. LRR repeat units follow at residues 101–122 (SLKAMDFSNNHIGGSIPSTLPV), 123–146 (SLQNLFLSGNNFTGTIPESLSSLK), 147–169 (SLSVMSLNNNLLSGKIPDVFQDL), 171–193 (LMINIDLSSNNLSGPLPPSMQNL), 195–217 (TLTSLLLQNNHLSGELDVLQDLP), and 218–238 (LKDLNVENNLFNGPIPEKLLS). N133 is a glycosylation site (N-linked (GlcNAc...) asparagine). Residues N181 and N192 are each glycosylated (N-linked (GlcNAc...) asparagine). A glycan (N-linked (GlcNAc...) asparagine) is linked at N250. Residues 254–308 (APSPSPETPPSPTSPKRPFFGPPSPNASAGHGQAHVRSPPSDHHPSRPTPQGKED) form a disordered region. Positions 256–278 (SPSPETPPSPTSPKRPFFGPPSP) are enriched in pro residues. N-linked (GlcNAc...) asparagine glycosylation occurs at N279. A helical transmembrane segment spans residues 315–335 (IIWISILGAFSFVVLALVCLL). The Cytoplasmic portion of the chain corresponds to 336 to 775 (CGRKCLRKRE…NGDNQYTGRR (440 aa)). The segment at 345 to 414 (EDSEQLSKPH…VGSESKQESH (70 aa)) is disordered. A compositionally biased stretch (polar residues) spans 367-379 (RSNASMLPPSNTF). The span at 380 to 391 (NKDKEARPKERV) shows a compositional bias: basic and acidic residues. The region spanning 478–756 (FSHENLIGTG…EVVQDLSDMI (279 aa)) is the Protein kinase domain.

Belongs to the protein kinase superfamily. Ser/Thr protein kinase family. As to expression, expressed in roots, stems, leaves and flowers. Low expression in seedlings and siliques.

The protein localises to the membrane. In terms of biological role, not essential for epidermal patterning and not redundant with STRUBBELIG. The protein is Protein STRUBBELIG-RECEPTOR FAMILY 1 (SRF1) of Arabidopsis thaliana (Mouse-ear cress).